We begin with the raw amino-acid sequence, 119 residues long: Protein TusC (119 aa).

It belongs to the DsrF/TusC family. Heterohexamer, formed by a dimer of trimers. The hexameric TusBCD complex contains 2 copies each of TusB, TusC and TusD. The TusBCD complex interacts with TusE.

It is found in the cytoplasm. Its function is as follows. Part of a sulfur-relay system required for 2-thiolation of 5-methylaminomethyl-2-thiouridine (mnm(5)s(2)U) at tRNA wobble positions. In Shigella boydii serotype 18 (strain CDC 3083-94 / BS512), this protein is Protein TusC.